The primary structure comprises 574 residues: Membralin (574 aa).

A disordered region spans residues 1-27; sequence MSEHAAAPGPGPNGGGGGGAAPVRGPR. At Ser-2 the chain carries N-acetylserine. Residues 69-89 form a helical membrane-spanning segment; sequence FFVLLKALFVLFVLAYIHIVF. Asn-180 is a glycosylation site (N-linked (GlcNAc...) asparagine). 3 helical membrane passes run 293 to 313, 337 to 357, and 417 to 437; these read TSYL…SMLL, IAFP…MEAI, and YSSL…IYFF. Composition is skewed to low complexity over residues 461 to 470 and 491 to 501; these read LGPGTPTALP and LGPSSSPAPTG. 2 disordered regions span residues 461-515 and 546-574; these read LGPG…GASV and RRPT…PAGS.

This sequence belongs to the membralin family. Interacts with ERLIN2. Detected in brain, spinal cord, lung, liver and kidney.

It is found in the endoplasmic reticulum membrane. May have a role in the ERAD pathway required for clearance of misfolded proteins in the endoplasmic reticulum (ER). Promotes survival of motor neurons, probably by protecting against ER stress. The chain is Membralin (Tmem259) from Mus musculus (Mouse).